Here is a 485-residue protein sequence, read N- to C-terminus: Iroquois-class homeodomain protein IRX-4 (485 aa).

Residues 142–203 constitute a DNA-binding region (homeobox; TALE-type); it reads GTRRKNATRE…NARRRLKKEN (62 aa). Residues 206-313 form a disordered region; sequence TWPPRNKCSD…EEEEAAERAR (108 aa). A compositionally biased stretch (acidic residues) spans 221-232; the sequence is EEEEEEEEECSQ. Residues 234-253 show a composition bias toward basic and acidic residues; it reads DAMKSEKAEEPTGKEEKELE. Residues 254-269 are compositionally biased toward acidic residues; it reads LSDLEDLDAAESESSE. The span at 282-294 shows a compositional bias: pro residues; it reads HPLPGGGPPPRAA.

Belongs to the TALE/IRO homeobox family. In terms of tissue distribution, ventricles of the heart, developing feather buds, retina, hindbrain.

The protein localises to the nucleus. Functionally, regulates the chamber-specific expression of myosin isoforms by activating the expression of the ventricle myosin heavy chain-1 (Vmhc1) and suppressing the expression of the atrial myosin heavy chain-1 (Amhc1) in the ventricles. May play a critical role in establishing chamber-specific gene expression in the developing heart. In Gallus gallus (Chicken), this protein is Iroquois-class homeodomain protein IRX-4 (IRX4).